Reading from the N-terminus, the 238-residue chain is MGKVRLLVQRRGRGSPTFRSPTHRAAGKVKIPTFDGDLVKGKVVALIKDSIHYAPLMVVKWENGAQSLLPAPLGISVGDTVYYGKEAPNAIGSIKPLSEIPEGTKIYMLENNPGDGGKLVRASGDFALLVQKLGDKVIVQLPSGQFKTLSANARAVIGVIAGGGRKEKPFVKAGNKYYWASSRNRHWPVVNGVKKNASDHPFGGKRHSNHSKPFTVSKWAPPGRKVGYIGARKTGRGK.

The disordered stretch occupies residues 197–219; that stretch reads ASDHPFGGKRHSNHSKPFTVSKW.

The protein belongs to the universal ribosomal protein uL2 family. In terms of assembly, part of the 50S ribosomal subunit. Forms a bridge to the 30S subunit in the 70S ribosome.

Functionally, one of the primary rRNA binding proteins. Required for association of the 30S and 50S subunits to form the 70S ribosome, for tRNA binding and peptide bond formation. It has been suggested to have peptidyltransferase activity; this is somewhat controversial. Makes several contacts with the 16S rRNA in the 70S ribosome. This is Large ribosomal subunit protein uL2 from Nanoarchaeum equitans (strain Kin4-M).